Consider the following 449-residue polypeptide: Streptomycin-6-phosphate phosphatase (449 aa).

The signal sequence occupies residues 1 to 32 (MRFAYGRLPWRRGAVLGSALLVLVTAPAASTA). Residue D50 participates in Mg(2+) binding. Residue D50 coordinates Zn(2+). S99 (phosphoserine intermediate) is an active-site residue. 2 residues coordinate Mg(2+): D151 and T153. The segment at 268 to 290 (APGGTAPQRCATRNPGRPAGTPD) is disordered. Residue E321 coordinates Mg(2+). Zn(2+) is bound by residues D326, H330, D368, H369, and H412.

It belongs to the alkaline phosphatase family. Requires Mg(2+) as cofactor. The cofactor is Zn(2+).

It localises to the secreted. The enzyme catalyses streptomycin 6-phosphate + H2O = streptomycin + phosphate. It functions in the pathway antibiotic biosynthesis; streptomycin biosynthesis. Functionally, specifically cleaves both streptomycin-6-phosphate and, more slowly, streptomycin-3''-phosphate during the biosynthesis of streptomycin. The protein is Streptomycin-6-phosphate phosphatase (strK) of Streptomyces griseus.